We begin with the raw amino-acid sequence, 400 residues long: Elongation factor Tu (400 aa).

A tr-type G domain is found at 10–209 (KPHVNIGTIG…EVDKYIPTPE (200 aa)). Residues 19 to 26 (GHVDHGKT) are G1. 19 to 26 (GHVDHGKT) is a binding site for GTP. Thr26 contacts Mg(2+). Residues 60–64 (GITIN) are G2. Residues 81 to 84 (DCPG) are G3. Residues 81–85 (DCPGH) and 136–139 (NKAD) each bind GTP. Residues 136–139 (NKAD) form a G4 region. The G5 stretch occupies residues 174-176 (SGL).

The protein belongs to the TRAFAC class translation factor GTPase superfamily. Classic translation factor GTPase family. EF-Tu/EF-1A subfamily. Monomer.

It localises to the cytoplasm. It catalyses the reaction GTP + H2O = GDP + phosphate + H(+). Its function is as follows. GTP hydrolase that promotes the GTP-dependent binding of aminoacyl-tRNA to the A-site of ribosomes during protein biosynthesis. In Heliobacterium modesticaldum (strain ATCC 51547 / Ice1), this protein is Elongation factor Tu.